Consider the following 179-residue polypeptide: Inosine/xanthosine triphosphatase (179 aa).

Glu-71 is a binding site for Mg(2+). Residue 71-72 (EA) coordinates substrate.

The protein belongs to the YjjX NTPase family. In terms of assembly, homodimer. It depends on Mg(2+) as a cofactor. Requires Mn(2+) as cofactor.

The catalysed reaction is XTP + H2O = XDP + phosphate + H(+). It carries out the reaction ITP + H2O = IDP + phosphate + H(+). Functionally, phosphatase that hydrolyzes non-canonical purine nucleotides such as XTP and ITP to their respective diphosphate derivatives. Probably excludes non-canonical purines from DNA/RNA precursor pool, thus preventing their incorporation into DNA/RNA and avoiding chromosomal lesions. The protein is Inosine/xanthosine triphosphatase of Shewanella sp. (strain ANA-3).